Reading from the N-terminus, the 464-residue chain is Synaptosomal-associated protein 47 (464 aa).

The disordered stretch occupies residues 20–42; that stretch reads GRLWDSSGVPQRQKRPGPWRTQT. T-SNARE coiled-coil homology domains are found at residues 154-216 and 401-463; these read VADA…LTEL and TSLP…MKRL.

The protein belongs to the SVAP1 family. As to quaternary structure, forms a complex containing SNAP47, VAMP2 and STX1A. Associates with the BLOC-1 complex. Interacts with BLOC1S6.

It localises to the endomembrane system. It is found in the cytoplasm. Its subcellular location is the perinuclear region. Its function is as follows. Plays a role in intracellular membrane fusion. This Homo sapiens (Human) protein is Synaptosomal-associated protein 47 (SNAP47).